A 273-amino-acid polypeptide reads, in one-letter code: 2,3,4,5-tetrahydropyridine-2,6-dicarboxylate N-succinyltransferase (273 aa).

Arg-104 and Asp-141 together coordinate substrate.

It belongs to the transferase hexapeptide repeat family. Homotrimer.

The protein localises to the cytoplasm. It catalyses the reaction (S)-2,3,4,5-tetrahydrodipicolinate + succinyl-CoA + H2O = (S)-2-succinylamino-6-oxoheptanedioate + CoA. The protein operates within amino-acid biosynthesis; L-lysine biosynthesis via DAP pathway; LL-2,6-diaminopimelate from (S)-tetrahydrodipicolinate (succinylase route): step 1/3. The polypeptide is 2,3,4,5-tetrahydropyridine-2,6-dicarboxylate N-succinyltransferase (Nitrosospira multiformis (strain ATCC 25196 / NCIMB 11849 / C 71)).